Here is a 438-residue protein sequence, read N- to C-terminus: Chaperone SurA (438 aa).

Positions 1 to 28 (MKTMNPYIRHLILLICCLGGMLAQPLSA) are cleaved as a signal peptide. PpiC domains lie at 181–282 (EEEY…KLVS) and 292–390 (VQQT…QVLE).

The protein resides in the periplasm. The enzyme catalyses [protein]-peptidylproline (omega=180) = [protein]-peptidylproline (omega=0). In terms of biological role, chaperone involved in the correct folding and assembly of outer membrane proteins. Recognizes specific patterns of aromatic residues and the orientation of their side chains, which are found more frequently in integral outer membrane proteins. May act in both early periplasmic and late outer membrane-associated steps of protein maturation. The protein is Chaperone SurA of Dechloromonas aromatica (strain RCB).